The following is an 818-amino-acid chain: Dipeptidyl-peptidase 7 (818 aa).

Positions 1-22 (MKLKRILLSVALLCGIGTTAMA) are cleaved as a signal peptide. Catalysis depends on charge relay system residues H87, D223, and S645.

The protein belongs to the peptidase S46 family.

In terms of biological role, catalyzes the removal of dipeptides from the N-terminus of oligopeptides. Most efficiently cleaves the synthetic substrate Met-Leu-methylcoumaryl-7-amide (Met-Leu-MCA), and slowly hydrolyzes Leu-Gln-, Lys-Ala-, Leu-Arg, and Ala-Asn-MCA. Is likely involved in amino acid metabolism and bacterial growth/survival of asaccharolytic P.endodontalis, that utilizes amino acids from extracellular proteinaceous nutrients as energy and carbon sources. In Porphyromonas endodontalis (strain ATCC 35406 / DSM 24491 / JCM 8526 / CCUG 16442 / BCRC 14492 / NCTC 13058 / HG 370) (Bacteroides endodontalis), this protein is Dipeptidyl-peptidase 7.